Consider the following 540-residue polypeptide: Putative actin-fragmin kinase DDB_G0287957 (540 aa).

Residues 27-68 (KNENLNIKNEILNNNNNNNNNKNNNNNNNNNNNIENNSKNEN) adopt a coiled-coil conformation. Disordered regions lie at residues 37–70 (ILNN…ENFN) and 317–341 (NNNN…INNC).

The protein belongs to the protein kinase superfamily. AFK Ser/Thr protein kinase family.

The protein is Putative actin-fragmin kinase DDB_G0287957 of Dictyostelium discoideum (Social amoeba).